Reading from the N-terminus, the 385-residue chain is Succinate--CoA ligase [ADP-forming] subunit beta (385 aa).

An ATP-grasp domain is found at 9–244; the sequence is KEVLRKYGVS…LDEEDPKEIE (236 aa). Residues K46, 53–55, E99, C102, and E107 each bind ATP; that span reads GRG. Residues N199 and D213 each coordinate Mg(2+). Residues N264 and 321–323 contribute to the substrate site; that span reads GIM.

The protein belongs to the succinate/malate CoA ligase beta subunit family. As to quaternary structure, heterotetramer of two alpha and two beta subunits. Requires Mg(2+) as cofactor.

The enzyme catalyses succinate + ATP + CoA = succinyl-CoA + ADP + phosphate. It carries out the reaction GTP + succinate + CoA = succinyl-CoA + GDP + phosphate. The protein operates within carbohydrate metabolism; tricarboxylic acid cycle; succinate from succinyl-CoA (ligase route): step 1/1. Functionally, succinyl-CoA synthetase functions in the citric acid cycle (TCA), coupling the hydrolysis of succinyl-CoA to the synthesis of either ATP or GTP and thus represents the only step of substrate-level phosphorylation in the TCA. The beta subunit provides nucleotide specificity of the enzyme and binds the substrate succinate, while the binding sites for coenzyme A and phosphate are found in the alpha subunit. This Bacillus velezensis (strain DSM 23117 / BGSC 10A6 / LMG 26770 / FZB42) (Bacillus amyloliquefaciens subsp. plantarum) protein is Succinate--CoA ligase [ADP-forming] subunit beta.